The chain runs to 456 residues: Gustatory receptor for sugar taste 64a (456 aa).

The disordered stretch occupies residues 1–30; the sequence is MKGPNLNFRKTPSKDNGVKQVESLARPETP. Over 1–91 the chain is Cytoplasmic; that stretch reads MKGPNLNFRK…RESNPRRVRF (91 aa). The helical transmembrane segment at 92 to 114 threads the bilayer; sequence AYKSIPMFVTLIFMIATSILFLS. The Extracellular segment spans residues 115–128; it reads MFTHLLKIGITAKN. Residues 129 to 150 traverse the membrane as a helical segment; that stretch reads FVGLVFFGCVLSAYVVFIRLAK. G131 provides a ligand contact to sucrose. At 151–182 the chain is on the cytoplasmic side; it reads KWPAVVRIWTRTEIPFTKPPYEIPKRNLSRRV. Residues 183-205 traverse the membrane as a helical segment; it reads QLAALAIIGLSLGEHALYQVSAI. Residues E196, H197, and Y234 each coordinate sucrose. The D-maltose site is built by E196, H197, Y234, N253, and T257. Over 206 to 245 the chain is Extracellular; the sequence is LSYTRRIQMCANITTVPSFNNYMQTNYDYVFQLLPYSPII. A helical transmembrane segment spans residues 246–271; that stretch reads AVLILLINGACTFVWNYMDLFIMMIS. Residue T257 participates in sucrose binding. Topologically, residues 272–318 are cytoplasmic; that stretch reads KGLSYRFEQITTRIRKLEHEEVCESVFIQIREHYVKMCELLEFVDSA. A helical membrane pass occupies residues 319 to 342; the sequence is MSSLILLSCVNNLYFVCYQLLNVF. At 343–350 the chain is on the extracellular side; sequence NKLRWPIN. Residues 351–373 traverse the membrane as a helical segment; it reads YIYFWYSLLYLIGRTAFVFLTAA. Y353 is a sucrose binding site. Y353 is a binding site for D-maltose. At 374 to 421 the chain is on the cytoplasmic side; sequence DINEESKRGLGVLRRVSSRSWCVEVERLIFQMTTQTVALSGKKFYFLT. Residues 422–441 form a helical membrane-spanning segment; it reads RRLLFGMAGTIVTYELVLLQ. Topologically, residues 442-456 are extracellular; sequence FDEPNRRKGLQPLCA.

The protein belongs to the insect chemoreceptor superfamily. Gustatory receptor (GR) family. Gr5a subfamily. As to quaternary structure, homotetramer. In terms of tissue distribution, expressed in Gr5a-expressing sugar-sensing cells.

The protein resides in the cell membrane. Functionally, one of the few identified sugar gustatory receptors identified so far and which promotes the starvation-induced increase of feeding motivation. Required in combination with Gr64f to detect sucrose, maltose, and glucose. The polypeptide is Gustatory receptor for sugar taste 64a (Gr64a) (Drosophila melanogaster (Fruit fly)).